We begin with the raw amino-acid sequence, 146 residues long: Catabolic 3-dehydroquinase (146 aa).

Tyr-24 serves as the catalytic Proton acceptor. Substrate contacts are provided by Asn-78, His-84, and Asp-91. Residue His-104 is the Proton donor of the active site. Residues 105–106 (IT) and Arg-115 each bind substrate.

The protein belongs to the type-II 3-dehydroquinase family. In terms of assembly, homododecamer. Adopts a ring-like structure, composed of an arrangement of two hexameric rings stacked on top of one another.

The catalysed reaction is 3-dehydroquinate = 3-dehydroshikimate + H2O. It participates in aromatic compound metabolism; 3,4-dihydroxybenzoate biosynthesis; 3,4-dihydroxybenzoate from 3-dehydroquinate: step 1/2. Functionally, is involved in the catabolism of quinate. Allows the utilization of quinate as carbon source via the beta-ketoadipate pathway. This chain is Catabolic 3-dehydroquinase, found in Scheffersomyces stipitis (strain ATCC 58785 / CBS 6054 / NBRC 10063 / NRRL Y-11545) (Yeast).